Here is a 456-residue protein sequence, read N- to C-terminus: UDP-N-acetylglucosamine 1-carboxyvinyltransferase (456 aa).

Residue 34–35 (KN) coordinates phosphoenolpyruvate. R104 contributes to the UDP-N-acetyl-alpha-D-glucosamine binding site. C128 (proton donor) is an active-site residue. C128 is modified (2-(S-cysteinyl)pyruvic acid O-phosphothioketal). UDP-N-acetyl-alpha-D-glucosamine-binding residues include D319 and I341.

The protein belongs to the EPSP synthase family. MurA subfamily.

It localises to the cytoplasm. The enzyme catalyses phosphoenolpyruvate + UDP-N-acetyl-alpha-D-glucosamine = UDP-N-acetyl-3-O-(1-carboxyvinyl)-alpha-D-glucosamine + phosphate. The protein operates within cell wall biogenesis; peptidoglycan biosynthesis. Functionally, cell wall formation. Adds enolpyruvyl to UDP-N-acetylglucosamine. The protein is UDP-N-acetylglucosamine 1-carboxyvinyltransferase of Prochlorococcus marinus (strain AS9601).